Consider the following 780-residue polypeptide: MAPKSSSSGSKKKSSASSNSADAKASKFKLPAEFITRPHPSKDHGKETCTAYIHPNVLSSLEINPGSFCTVGKIGENGILVIARAGDEEVHPVNVITLSTTIRSVGNLILGDRLELKKAQVQPPYATKVTVGSLQGYNILECMEEKVIQKLLDDSGVIMPGMIFQNLKTKAGDESIDVVITDASDDSLPDVSQLDLNMDDMYGGLDNLFYLSPPFIFRKGSTHITFSKETQANRKYNLPEPLSYAAVGGLDKEIESLKSAIEIPLHQPTLFSSFGVSPPRGILLHGPPGTGKTMLLRVVANTSNAHVLTINGPSIVSKYLGETEAALRDIFNEARKYQPSIIFIDEIDSIAPNRANDDSGEVESRVVATLLTLMDGMGAAGKVVVIAATNRPNSVDPALRRPGRFDQEVEIGIPDVDARFDILTKQFSRMSSDRHVLDSEAIKYIASKTHGYVGADLTALCRESVMKTIQRGLGTDANIDKFSLKVTLKDVESAMVDIRPSAMREIFLEMPKVYWSDIGGQEELKTKMKEMIQLPLEASETFARLGISAPKGVLLYGPPGCSKTLTAKALATESGINFLAVKGPEIFNKYVGESERAIREIFRKARSAAPSIIFFDEIDALSPDRDGSSTSAANHVLTSLLNEIDGVEELKGVVIVAATNRPDEIDAALLRPGRLDRHIYVGPPDVNARLEILKKCTKKFNTEESGVDLHELADRTEGYSGAEVVLLCQEAGLAAIMEDLDVAKVELRHFEKAFKGIARGITPEMLSYYEEFALRSGSSS.

Positions 1–23 (MAPKSSSSGSKKKSSASSNSADA) are enriched in low complexity. The segment at 1–26 (MAPKSSSSGSKKKSSASSNSADAKAS) is disordered. ATP is bound by residues 286–293 (GPPGTGKT) and 557–564 (GPPGCSKT).

This sequence belongs to the AAA ATPase family. AFG2 subfamily. As to quaternary structure, homohexamer; ATP binding induces oligomerization. Forms a ring-shaped particle of about 12 nm diameter, that displays 6-fold radial symmetry. Associates with cytoplasmic pre-60S ribosomal particles containing ARX1, ALB1, RLP24 and NOG1. Binds to pre-60S ribosomal particles soon after their export from the nucleus and is released before REI1 and LSG1 are incorporated into the particles. Hexameric form interacts with RLP24 (via C-terminal); the interaction recruits AFG2 to pre-60S ribosomal particles and promotes AFG2 ATPase activity and RLP24 release from pre-60S ribosomal particles. Interacts (via N-terminus) with nucleoporin NUP116 (via N-terminus); the interaction is required for RLP24 release from pre-60S ribosomal particles.

The protein resides in the cytoplasm. It catalyses the reaction ATP + H2O = ADP + phosphate + H(+). Its activity is regulated as follows. The hexamer is activated by RLP24 during pre-60S ribosomal particle maturation; RLP24 activates ATPase activity of both ATP-binding regions and increases cooperativity between AFG2 subunits. The second ATP-binding region is inhibited by diazaborine; the inhibition requires prior ATP binding specifically to the second ATP-binding region. In terms of biological role, ATP-dependent chaperone which uses the energy provided by ATP hydrolysis to generate mechanical force to disassemble protein complexes. Plays an essential role in the cytoplasmic maturation steps of pre-60S ribosomal particles by promoting the release of shuttling protein RLP24 from the pre-ribosomal particles. This step facilitates the subsequent release of other shuttling proteins such as NOG1 and allows the transition of the pre-ribosomal particles to later maturation forms that bind REI1. Essential for viability. This is ATPase family gene 2 protein from Saccharomyces cerevisiae (strain ATCC 204508 / S288c) (Baker's yeast).